A 131-amino-acid polypeptide reads, in one-letter code: Small ribosomal subunit protein uS8 (131 aa).

It belongs to the universal ribosomal protein uS8 family. Part of the 30S ribosomal subunit. Contacts proteins S5 and S12.

Functionally, one of the primary rRNA binding proteins, it binds directly to 16S rRNA central domain where it helps coordinate assembly of the platform of the 30S subunit. This Chromobacterium violaceum (strain ATCC 12472 / DSM 30191 / JCM 1249 / CCUG 213 / NBRC 12614 / NCIMB 9131 / NCTC 9757 / MK) protein is Small ribosomal subunit protein uS8.